A 229-amino-acid chain; its full sequence is Potassium/proton antiporter CemA (229 aa).

A run of 3 helical transmembrane segments spans residues 7 to 27, 106 to 126, and 189 to 209; these read FSPIFHLSFIVFLPWGIYLSF, MILRLSTNLICVVIISGFYIW, and IISGLVSTFPVILDTIFKYWI.

It belongs to the CemA family.

Its subcellular location is the plastid membrane. It carries out the reaction K(+)(in) + H(+)(out) = K(+)(out) + H(+)(in). Functionally, may be involved in proton extrusion. The polypeptide is Potassium/proton antiporter CemA (Cuscuta reflexa (Southern Asian dodder)).